The primary structure comprises 257 residues: Homeobox protein ceh-36 (257 aa).

A compositionally biased stretch (low complexity) spans 33–49 (SATTSSTTMAPMAPNSE). Disordered regions lie at residues 33–63 (SATT…TSFN) and 113–156 (DRNN…GTPE). A DNA-binding region (homeobox) is located at residues 55–117 (GRRERTSFNR…NRRAKDRNNK (63 aa)). Residues 123–137 (HPGSTSSRSSNGSPH) show a composition bias toward low complexity.

This sequence belongs to the paired homeobox family. Interacts with sox-2. In terms of tissue distribution, expressed in ASE and AWC chemosensory neurons. Expressed left-right asymmetrically in the embryo, in the grandmother cell and the mother cell to the MI pharyngeal motorneuron but in neither analogous precursors of the e3D neuron.

It is found in the nucleus. Its function is as follows. Probable transcription factor, acting as a progenitor identity factor regulating the development of lineally-related embryonic cells including glial, excretory and neuronal cells. Mediates chemosensory function of ASE and AWC neurons. In ASE neurons, required to diversify the fate of the ASEL neurons from the ASER neurons. Acts cell-autonomously to establish a neuronal left right asymmetry, possibly promoting asymmetric expression of the helix-loop-helix proteins ngn-1 and hlh-2. In cooperation with the transcription factor sox-2, required for the differentiation of AWC olfactory neurons. May regulate the expression of sox-2 in AWC olfactory neurons. The polypeptide is Homeobox protein ceh-36 (Caenorhabditis elegans).